The sequence spans 144 residues: MKTLLLLAVIMAIGLLQVHGDLLNFRKMIKLTTGKEPATRYSFYGCYCGMSGRGTPKDATDWCCRAHDCCYKNLESRGCRTKFLKYNVTYQEDQIVCEDADDCKSQVCQCDKIAANCFAANLKTYNKKLRFYNKFRCRGAAPAC.

The signal sequence occupies residues 1–20 (MKTLLLLAVIMAIGLLQVHG). Cystine bridges form between C46/C137, C48/C64, C63/C117, C69/C144, C70/C110, C79/C103, and C97/C108. The Ca(2+) site is built by Y47, G49, and S51. H67 is an active-site residue. A Ca(2+)-binding site is contributed by D68. D111 is a catalytic residue.

The protein belongs to the phospholipase A2 family. Ca(2+) is required as a cofactor.

It is found in the secreted. The protein localises to the cell membrane. Its subcellular location is the mitochondrion outer membrane. The catalysed reaction is a 1,2-diacyl-sn-glycero-3-phosphoethanolamine + H2O = a 1-acyl-sn-glycero-3-phosphoethanolamine + a fatty acid + H(+). It catalyses the reaction 1-hexadecanoyl-2-(9Z-octadecenoyl)-sn-glycero-3-phosphoethanolamine + H2O = 1-hexadecanoyl-sn-glycero-3-phosphoethanolamine + (9Z)-octadecenoate + H(+). It carries out the reaction 1-hexadecanoyl-2-(9Z,12Z-octadecadienoyl)-sn-glycero-3-phosphoethanolamine + H2O = 1-hexadecanoyl-sn-glycero-3-phosphoethanolamine + (9Z,12Z)-octadecadienoate + H(+). The enzyme catalyses 1-hexadecanoyl-2-(5Z,8Z,11Z,14Z-eicosatetraenoyl)-sn-glycero-3-phosphoethanolamine + H2O = 1-hexadecanoyl-sn-glycero-3-phosphoethanolamine + (5Z,8Z,11Z,14Z)-eicosatetraenoate + H(+). The catalysed reaction is N-hexadecanoyl-1,2-di-(9Z-octadecenoyl)-sn-glycero-3-phosphoethanolamine + H2O = N-hexadecanoyl-1-(9Z-octadecenoyl)-sn-glycero-3-phosphoethanolamine + (9Z)-octadecenoate + H(+). It catalyses the reaction 1,2-dihexadecanoyl-sn-glycero-3-phospho-(1'-sn-glycerol) + H2O = 1-hexadecanoyl-sn-glycero-3-phospho-(1'-sn-glycerol) + hexadecanoate + H(+). It carries out the reaction 1-hexadecanoyl-2-(9Z-octadecenoyl)-sn-glycero-3-phosphoglycerol + H2O = 1-hexadecanoyl-sn-glycero-3-phosphoglycerol + (9Z)-octadecenoate + H(+). The enzyme catalyses 1-hexadecanoyl-2-(9Z-octadecenoyl)-sn-glycero-3-phospho-(1'-sn-glycerol) + H2O = 1-hexadecanoyl-sn-glycero-3-phospho-(1'-sn-glycerol) + (9Z)-octadecenoate + H(+). The catalysed reaction is a 1,2-diacyl-sn-glycero-3-phosphocholine + H2O = a 1-acyl-sn-glycero-3-phosphocholine + a fatty acid + H(+). It catalyses the reaction 1,2-dihexadecanoyl-sn-glycero-3-phosphocholine + H2O = 1-hexadecanoyl-sn-glycero-3-phosphocholine + hexadecanoate + H(+). It carries out the reaction 1-hexadecanoyl-2-(9Z-octadecenoyl)-sn-glycero-3-phosphocholine + H2O = 1-hexadecanoyl-sn-glycero-3-phosphocholine + (9Z)-octadecenoate + H(+). The enzyme catalyses 1-hexadecanoyl-2-(9Z,12Z-octadecadienoyl)-sn-glycero-3-phosphocholine + H2O = (9Z,12Z)-octadecadienoate + 1-hexadecanoyl-sn-glycero-3-phosphocholine + H(+). The catalysed reaction is 1-hexadecanoyl-2-(4Z,7Z,10Z,13Z,16Z,19Z-docosahexaenoyl)-sn-glycero-3-phosphocholine + H2O = (4Z,7Z,10Z,13Z,16Z,19Z)-docosahexaenoate + 1-hexadecanoyl-sn-glycero-3-phosphocholine + H(+). In terms of biological role, secretory calcium-dependent phospholipase A2 that primarily targets extracellular phospholipids with implications in host antimicrobial defense, inflammatory response and tissue regeneration. Hydrolyzes the ester bond of the fatty acyl group attached at sn-2 position of phospholipids (phospholipase A2 activity) with preference for phosphatidylethanolamines and phosphatidylglycerols over phosphatidylcholines. Contributes to lipid remodeling of cellular membranes and generation of lipid mediators involved in pathogen clearance. Displays bactericidal activity against Gram-positive bacteria by directly hydrolyzing phospholipids of the bacterial membrane. Upon sterile inflammation, targets membrane phospholipids of extracellular mitochondria released from activated platelets, generating free unsaturated fatty acids such as arachidonate that is used by neighboring leukocytes to synthesize inflammatory eicosanoids such as leukotrienes. Simultaneously, by compromising mitochondrial membrane integrity, promotes the release in circulation of potent damage-associated molecular pattern molecules that activate the innate immune response. Plays a stem cell regulator role in the intestinal crypt. Within intracellular compartment mediates Paneth cell differentiation and its stem cell supporting functions by inhibiting Wnt signaling pathway in intestinal stem cell (ICS). Secreted in the intestinal lumen upon inflammation, acts in an autocrine way and promotes prostaglandin E2 synthesis that stimulates Wnt signaling pathway in ICS cells and tissue regeneration. May play a role in the biosynthesis of N-acyl ethanolamines that regulate energy metabolism and inflammation. Hydrolyzes N-acyl phosphatidylethanolamines to N-acyl lysophosphatidylethanolamines, which are further cleaved by a lysophospholipase D to release N-acyl ethanolamines. Independent of its catalytic activity, acts as a ligand for integrins. Binds to and activates integrins ITGAV:ITGB3, ITGA4:ITGB1 and ITGA5:ITGB1. Binds to a site (site 2) which is distinct from the classical ligand-binding site (site 1) and induces integrin conformational changes and enhanced ligand binding to site 1. Induces cell proliferation in an integrin-dependent manner. The protein is Phospholipase A2, membrane associated (PLA2G2A) of Bos taurus (Bovine).